The chain runs to 666 residues: tRNA 5-methylaminomethyl-2-thiouridine biosynthesis bifunctional protein MnmC (666 aa).

Residues 1 to 253 (MSSPFAPIIT…KRHMLCAYYE (253 aa)) form a tRNA (mnm(5)s(2)U34)-methyltransferase region. The segment at 283 to 666 (VGGGLAGCFI…FLRKKIIQGP (384 aa)) is FAD-dependent cmnm(5)s(2)U34 oxidoreductase.

It in the N-terminal section; belongs to the methyltransferase superfamily. tRNA (mnm(5)s(2)U34)-methyltransferase family. This sequence in the C-terminal section; belongs to the DAO family. It depends on FAD as a cofactor.

It localises to the cytoplasm. The enzyme catalyses 5-aminomethyl-2-thiouridine(34) in tRNA + S-adenosyl-L-methionine = 5-methylaminomethyl-2-thiouridine(34) in tRNA + S-adenosyl-L-homocysteine + H(+). In terms of biological role, catalyzes the last two steps in the biosynthesis of 5-methylaminomethyl-2-thiouridine (mnm(5)s(2)U) at the wobble position (U34) in tRNA. Catalyzes the FAD-dependent demodification of cmnm(5)s(2)U34 to nm(5)s(2)U34, followed by the transfer of a methyl group from S-adenosyl-L-methionine to nm(5)s(2)U34, to form mnm(5)s(2)U34. The chain is tRNA 5-methylaminomethyl-2-thiouridine biosynthesis bifunctional protein MnmC from Legionella pneumophila (strain Corby).